We begin with the raw amino-acid sequence, 182 residues long: Probable RNA 2'-phosphotransferase (182 aa).

The protein belongs to the KptA/TPT1 family.

Functionally, removes the 2'-phosphate from RNA via an intermediate in which the phosphate is ADP-ribosylated by NAD followed by a presumed transesterification to release the RNA and generate ADP-ribose 1''-2''-cyclic phosphate (APPR&gt;P). May function as an ADP-ribosylase. This Pseudomonas paraeruginosa (strain DSM 24068 / PA7) (Pseudomonas aeruginosa (strain PA7)) protein is Probable RNA 2'-phosphotransferase.